Here is a 473-residue protein sequence, read N- to C-terminus: H(+)/Cl(-) exchange transporter ClcA (473 aa).

At 1–32 the chain is on the cytoplasmic side; that stretch reads MKTDTSTFLAQQIVRLRRRDQIRRLMQRDKTP. The chain crosses the membrane as a helical span at residues 33 to 69; sequence LAILFMAAVVGTLTGLVGVAFEKTVSWVQNMRIGALV. Residues 70–76 are Periplasmic-facing; sequence QVADHAF. A helical membrane pass occupies residues 77–100; it reads LLWPLAFILSALLAMVGYFLVRKF. The Selectivity filter part_1 signature appears at 106 to 110; it reads GSGIP. Residue S107 coordinates chloride. An intramembrane region (helical) is located at residues 109 to 116; sequence IPEIEGAL. At 117–123 the chain is on the cytoplasmic side; the sequence is EELRPVR. The next 2 membrane-spanning stretches (helical) occupy residues 124-141 and 148-166; these read WWRV…TLGA and EGPT…LDVF. The Selectivity filter part_2 motif lies at 146-150; sequence GREGP. At 167–176 the chain is on the cytoplasmic side; that stretch reads RMRSAEARHT. Intramembrane regions (helical) lie at residues 177–189 and 193–201; these read LLAT…LSAA and PLAGILFII. Over 202–214 the chain is Cytoplasmic; sequence EEMRPQFRYNLIS. The helical transmembrane segment at 215-232 threads the bilayer; it reads IKAVFTGVIMSSIVFRIF. The Periplasmic portion of the chain corresponds to 233–252; it reads NGEAPIIEVGKLSDAPVNTL. A helical transmembrane segment spans residues 253-281; the sequence is WLYLILGIIFGCVGPVFNSLVLRTQDMFQ. Topologically, residues 282 to 287 are cytoplasmic; sequence RFHGGE. A helical transmembrane segment spans residues 288–309; that stretch reads IKKWVLMGGAIGGLCGILGLIE. Residues 310–329 are Periplasmic-facing; the sequence is PAAAGGGFNLIPIAAAGNFS. The next 2 helical transmembrane spans lie at 330–349 and 355–376; these read VGLL…LCFS and GIFA…MAAA. Positions 355 to 359 match the Selectivity filter part_3 motif; sequence GIFAP. Chloride is bound by residues I356 and F357. Over 377–386 the chain is Periplasmic; sequence VLFPQYHPEA. Residues 387-401 constitute an intramembrane region (helical); that stretch reads GTFAIAGMGALMAAS. The note=Loop between two helices intramembrane region spans 402–404; sequence VRA. Positions 405-416 form an intramembrane region, helical; sequence PLTGIVLVLEMT. Residues 417–421 constitute an intramembrane region (note=Loop between two helices); that stretch reads DNYQL. A helical membrane pass occupies residues 422–438; sequence ILPMIITCLGATLLAQF. The Cytoplasmic segment spans residues 439–473; it reads LGGKPLYSTILARTLAKQDAEQAAKNQNAPAGENT. Y445 is a chloride binding site.

Belongs to the chloride channel (TC 2.A.49) family. ClcA subfamily. Homodimer.

It localises to the cell inner membrane. The catalysed reaction is 2 chloride(in) + H(+)(out) = 2 chloride(out) + H(+)(in). Functionally, proton-coupled chloride transporter. Functions as antiport system and exchanges two chloride ions for 1 proton. Probably acts as an electrical shunt for an outwardly-directed proton pump that is linked to amino acid decarboxylation, as part of the extreme acid resistance (XAR) response. The protein is H(+)/Cl(-) exchange transporter ClcA of Salmonella paratyphi A (strain AKU_12601).